The chain runs to 780 residues: Protein SAV (780 aa).

ATP is bound by residues G253–T260 and G528–T535.

It belongs to the AAA ATPase family. CDC48 subfamily.

In terms of biological role, not yet known, shows ATPase activity. The sequence is that of Protein SAV (sav) from Sulfolobus acidocaldarius (strain ATCC 33909 / DSM 639 / JCM 8929 / NBRC 15157 / NCIMB 11770).